The following is a 310-amino-acid chain: Pantothenate kinase (310 aa).

95–102 (GSVAVGKS) provides a ligand contact to ATP.

This sequence belongs to the prokaryotic pantothenate kinase family.

The protein resides in the cytoplasm. It carries out the reaction (R)-pantothenate + ATP = (R)-4'-phosphopantothenate + ADP + H(+). It functions in the pathway cofactor biosynthesis; coenzyme A biosynthesis; CoA from (R)-pantothenate: step 1/5. This chain is Pantothenate kinase, found in Rhodococcus erythropolis (strain PR4 / NBRC 100887).